Here is a 228-residue protein sequence, read N- to C-terminus: 2-C-methyl-D-erythritol 4-phosphate cytidylyltransferase (228 aa).

This sequence belongs to the IspD/TarI cytidylyltransferase family. IspD subfamily.

It carries out the reaction 2-C-methyl-D-erythritol 4-phosphate + CTP + H(+) = 4-CDP-2-C-methyl-D-erythritol + diphosphate. It functions in the pathway isoprenoid biosynthesis; isopentenyl diphosphate biosynthesis via DXP pathway; isopentenyl diphosphate from 1-deoxy-D-xylulose 5-phosphate: step 2/6. Its function is as follows. Catalyzes the formation of 4-diphosphocytidyl-2-C-methyl-D-erythritol from CTP and 2-C-methyl-D-erythritol 4-phosphate (MEP). This chain is 2-C-methyl-D-erythritol 4-phosphate cytidylyltransferase, found in Geobacillus kaustophilus (strain HTA426).